The primary structure comprises 356 residues: tRNA-specific 2-thiouridylase MnmA (356 aa).

Residues 6-13 and L32 contribute to the ATP site; that span reads AMSGGVDS. C101 (nucleophile) is an active-site residue. A disulfide bridge links C101 with C193. Residue G125 participates in ATP binding. Residues 143-145 form an interaction with tRNA region; sequence KDQ. The Cysteine persulfide intermediate role is filled by C193.

The protein belongs to the MnmA/TRMU family.

It is found in the cytoplasm. It carries out the reaction S-sulfanyl-L-cysteinyl-[protein] + uridine(34) in tRNA + AH2 + ATP = 2-thiouridine(34) in tRNA + L-cysteinyl-[protein] + A + AMP + diphosphate + H(+). In terms of biological role, catalyzes the 2-thiolation of uridine at the wobble position (U34) of tRNA, leading to the formation of s(2)U34. The chain is tRNA-specific 2-thiouridylase MnmA from Mycolicibacterium smegmatis (strain ATCC 700084 / mc(2)155) (Mycobacterium smegmatis).